The following is a 180-amino-acid chain: Nucleoside triphosphate/diphosphate phosphatase (180 aa).

Arg26 acts as the Proton donor in catalysis. Mg(2+) is bound by residues Asn90, Asp106, Asp108, Asp110, Asp123, and Glu126.

It belongs to the Ntdp family. The cofactor is Mg(2+).

It catalyses the reaction a ribonucleoside 5'-triphosphate + H2O = a ribonucleoside 5'-diphosphate + phosphate + H(+). The catalysed reaction is a ribonucleoside 5'-diphosphate + H2O = a ribonucleoside 5'-phosphate + phosphate + H(+). Functionally, has nucleoside phosphatase activity towards nucleoside triphosphates and nucleoside diphosphates. This is Nucleoside triphosphate/diphosphate phosphatase from Staphylococcus aureus (strain MRSA252).